A 406-amino-acid chain; its full sequence is Argininosuccinate synthase (406 aa).

Residues 13 to 21 (AYSGGLDTS) and Ala-40 contribute to the ATP site. 2 residues coordinate L-citrulline: Tyr-91 and Ser-96. Position 121 (Gly-121) interacts with ATP. Residues Thr-123, Asn-127, and Asp-128 each coordinate L-aspartate. Asn-127 is an L-citrulline binding site. The L-citrulline site is built by Arg-131, Ser-182, Ser-191, Glu-267, and Tyr-279.

It belongs to the argininosuccinate synthase family. Type 1 subfamily. Homotetramer.

It localises to the cytoplasm. It carries out the reaction L-citrulline + L-aspartate + ATP = 2-(N(omega)-L-arginino)succinate + AMP + diphosphate + H(+). Its pathway is amino-acid biosynthesis; L-arginine biosynthesis; L-arginine from L-ornithine and carbamoyl phosphate: step 2/3. The polypeptide is Argininosuccinate synthase (Brucella anthropi (strain ATCC 49188 / DSM 6882 / CCUG 24695 / JCM 21032 / LMG 3331 / NBRC 15819 / NCTC 12168 / Alc 37) (Ochrobactrum anthropi)).